Consider the following 499-residue polypeptide: Apolipoprotein N-acyltransferase (499 aa).

The next 6 helical transmembrane spans lie at 17–37 (VLAG…ALAL), 38–58 (LWSA…AVLL), 84–104 (ASIW…WAWL), 131–151 (IWGL…GVGG), 163–183 (LARW…GWWL), and 198–218 (RSLL…WSLL). Positions 232 to 458 (WQPAIPTRSK…EGVGLADLHF (227 aa)) constitute a CN hydrolase domain. Catalysis depends on glutamate 273, which acts as the Proton acceptor. Residue lysine 322 is part of the active site. The active-site Nucleophile is the cysteine 370. Residues 474 to 494 (IGLMLFAVVGLGLSRVRSWLI) traverse the membrane as a helical segment.

Belongs to the CN hydrolase family. Apolipoprotein N-acyltransferase subfamily.

The protein resides in the cell inner membrane. It carries out the reaction N-terminal S-1,2-diacyl-sn-glyceryl-L-cysteinyl-[lipoprotein] + a glycerophospholipid = N-acyl-S-1,2-diacyl-sn-glyceryl-L-cysteinyl-[lipoprotein] + a 2-acyl-sn-glycero-3-phospholipid + H(+). It functions in the pathway protein modification; lipoprotein biosynthesis (N-acyl transfer). In terms of biological role, catalyzes the phospholipid dependent N-acylation of the N-terminal cysteine of apolipoprotein, the last step in lipoprotein maturation. The polypeptide is Apolipoprotein N-acyltransferase (Prochlorococcus marinus (strain MIT 9313)).